The sequence spans 340 residues: Phosphate carrier protein, mitochondrial (340 aa).

The transit peptide at 1 to 27 directs the protein to the mitochondrion; sequence MSVFSQLAESSKQNPFSLPVRSGNCAS. Solcar repeat units lie at residues 41–125, 138–222, and 239–317; these read KYYA…FKNV, YRTS…TVEA, and EQLV…VKVA. A run of 6 helical transmembrane segments spans residues 47–67, 95–114, 141–161, 200–220, 241–261, and 297–317; these read ALGG…LDLV, RALV…QGLG, SLYL…LAPM, PLWM…EKTV, LVVT…VSHP, and IIMI…VKVA.

Belongs to the mitochondrial carrier (TC 2.A.29) family.

It is found in the mitochondrion inner membrane. Transport of phosphate groups from the cytosol to the mitochondrial matrix. This chain is Phosphate carrier protein, mitochondrial, found in Caenorhabditis elegans.